A 537-amino-acid polypeptide reads, in one-letter code: Eukaryotic translation initiation factor 3 subunit L (537 aa).

In terms of domain architecture, PCI spans 300-512; the sequence is TFSSILLYIQ…IHIADTKVSH (213 aa).

Belongs to the eIF-3 subunit L family. Component of the eukaryotic translation initiation factor 3 (eIF-3) complex.

The protein localises to the cytoplasm. Functionally, component of the eukaryotic translation initiation factor 3 (eIF-3) complex, which is involved in protein synthesis of a specialized repertoire of mRNAs and, together with other initiation factors, stimulates binding of mRNA and methionyl-tRNAi to the 40S ribosome. The eIF-3 complex specifically targets and initiates translation of a subset of mRNAs involved in cell proliferation. The protein is Eukaryotic translation initiation factor 3 subunit L of Culex quinquefasciatus (Southern house mosquito).